The sequence spans 104 residues: L-rhamnose mutarotase (104 aa).

Tyr-18 serves as a coordination point for substrate. His-22 functions as the Proton donor in the catalytic mechanism. Substrate contacts are provided by residues Tyr-41 and 76-77; that span reads WW.

Belongs to the rhamnose mutarotase family. Homodimer.

It is found in the cytoplasm. The catalysed reaction is alpha-L-rhamnose = beta-L-rhamnose. The protein operates within carbohydrate metabolism; L-rhamnose metabolism. Its function is as follows. Involved in the anomeric conversion of L-rhamnose. In Rhizobium meliloti (strain 1021) (Ensifer meliloti), this protein is L-rhamnose mutarotase.